Reading from the N-terminus, the 439-residue chain is Tol-Pal system protein TolB (439 aa).

The first 22 residues, 1-22 (MTKFPRWLAILVGLLFPLSALT), serve as a signal peptide directing secretion.

It belongs to the TolB family. In terms of assembly, the Tol-Pal system is composed of five core proteins: the inner membrane proteins TolA, TolQ and TolR, the periplasmic protein TolB and the outer membrane protein Pal. They form a network linking the inner and outer membranes and the peptidoglycan layer.

It localises to the periplasm. In terms of biological role, part of the Tol-Pal system, which plays a role in outer membrane invagination during cell division and is important for maintaining outer membrane integrity. In Xylella fastidiosa (strain M12), this protein is Tol-Pal system protein TolB.